The primary structure comprises 397 residues: Corticosteroid-binding globulin (397 aa).

Positions 1–22 (MSLALYTCLFWLCTSGLWTTQA) are cleaved as a signal peptide. 4 N-linked (GlcNAc...) asparagine glycosylation sites follow: Asn89, Asn169, Asn217, and Asn232. Cortisol is bound at residue Gln247. Asn253 carries an N-linked (GlcNAc...) asparagine glycan. Asp279 serves as a coordination point for cortisol. N-linked (GlcNAc...) asparagine glycosylation occurs at Asn320. A cortisol-binding site is contributed by Trp385.

This sequence belongs to the serpin family. Expressed by the liver; secreted in plasma.

It is found in the secreted. In terms of biological role, major transport protein for glucocorticoids and progestins in the blood of almost all vertebrate species. The chain is Corticosteroid-binding globulin (Serpina6) from Mus musculus (Mouse).